The sequence spans 457 residues: Phosphomethylpyrimidine synthase (457 aa).

Substrate is bound by residues asparagine 80, methionine 109, tyrosine 139, histidine 175, 195-197, 236-239, and glutamate 275; these read SRG and DSLR. Histidine 279 is a binding site for Zn(2+). Position 302 (tyrosine 302) interacts with substrate. Histidine 343 contributes to the Zn(2+) binding site. Cysteine 423, cysteine 426, and cysteine 431 together coordinate [4Fe-4S] cluster.

This sequence belongs to the ThiC family. [4Fe-4S] cluster is required as a cofactor.

It catalyses the reaction 5-amino-1-(5-phospho-beta-D-ribosyl)imidazole + S-adenosyl-L-methionine = 4-amino-2-methyl-5-(phosphooxymethyl)pyrimidine + CO + 5'-deoxyadenosine + formate + L-methionine + 3 H(+). Its pathway is cofactor biosynthesis; thiamine diphosphate biosynthesis. In terms of biological role, catalyzes the synthesis of the hydroxymethylpyrimidine phosphate (HMP-P) moiety of thiamine from aminoimidazole ribotide (AIR) in a radical S-adenosyl-L-methionine (SAM)-dependent reaction. In Nostoc punctiforme (strain ATCC 29133 / PCC 73102), this protein is Phosphomethylpyrimidine synthase.